The sequence spans 112 residues: uncharacterized protein (112 aa).

A run of 3 helical transmembrane segments spans residues 33–53 (PSPLLLSLLLHYTVLFSPFGA), 58–78 (LYIYIYIYIYIYIYMCINVCT), and 91–111 (CVYVCTHFNIYIHTYIYLLFV).

It localises to the membrane. This is an uncharacterized protein from Saccharomyces cerevisiae (strain ATCC 204508 / S288c) (Baker's yeast).